Consider the following 341-residue polypeptide: Mediator of RNA polymerase II transcription subunit 18 (341 aa).

The disordered stretch occupies residues 139–216 (KVMDKEKVQS…KEHSEGNASQ (78 aa)). The segment covering 163–211 (EDKKENIKKEESGEEVKGSGEEVKGSGEEVKGSGEEAKKSGEEAKEHSE) has biased composition (basic and acidic residues).

It belongs to the Mediator complex subunit 18 family. Component of the Mediator complex.

The protein resides in the nucleus. Its function is as follows. Component of the Mediator complex, a coactivator involved in the regulated transcription of nearly all RNA polymerase II-dependent genes. Mediator functions as a bridge to convey information from gene-specific regulatory proteins to the basal RNA polymerase II transcription machinery. Mediator is recruited to promoters by direct interactions with regulatory proteins and serves as a scaffold for the assembly of a functional preinitiation complex with RNA polymerase II and the general transcription factors. This is Mediator of RNA polymerase II transcription subunit 18 (SRB5) from Debaryomyces hansenii (strain ATCC 36239 / CBS 767 / BCRC 21394 / JCM 1990 / NBRC 0083 / IGC 2968) (Yeast).